The primary structure comprises 1241 residues: Putative urea carboxylase (1241 aa).

In terms of domain architecture, Biotin carboxylation spans Ala3 to Tyr459. ATP contacts are provided by Lys117 and Glu201. An ATP-grasp domain is found at Arg121–Asp321. The 81-residue stretch at Glu1159 to Arg1239 folds into the Biotinyl-binding domain. Lys1202 carries the N6-biotinyllysine modification.

It depends on biotin as a cofactor.

It carries out the reaction urea + hydrogencarbonate + ATP = urea-1-carboxylate + ADP + phosphate + H(+). Its function is as follows. Involved in the utilization of lactams. Required for the conversion of exogenous 2-pyrrolidinone (gamma-butyrolactam) to endogenous gamma-amino-n-butyrate (GABA). The polypeptide is Putative urea carboxylase (lamA) (Emericella nidulans (strain FGSC A4 / ATCC 38163 / CBS 112.46 / NRRL 194 / M139) (Aspergillus nidulans)).